Consider the following 449-residue polypeptide: Pentalenene oxygenase (449 aa).

Residues 251 to 273 (VITVMAAGTETVAGTLTWIFHLL) traverse the membrane as a helical segment. Residue cysteine 393 coordinates heme.

The protein belongs to the cytochrome P450 family.

The protein resides in the membrane. The enzyme catalyses pentalenene + 4 reduced [2Fe-2S]-[ferredoxin] + 2 O2 + 4 H(+) = pentalen-13-al + 4 oxidized [2Fe-2S]-[ferredoxin] + 3 H2O. It participates in antibiotic biosynthesis; neopentalenolactone biosynthesis. Functionally, catalyzes the conversion of pentalenene to pentalen-13-al by stepwise oxidation via pentalen-13-ol, a precursor of neopentalenolactone antibiotic. The sequence is that of Pentalenene oxygenase (ptlI) from Streptomyces avermitilis (strain ATCC 31267 / DSM 46492 / JCM 5070 / NBRC 14893 / NCIMB 12804 / NRRL 8165 / MA-4680).